The following is a 350-amino-acid chain: Serpentine receptor class beta-12 (350 aa).

Topologically, residues 1-21 (MSEANLTECELAYQLTYHPFY) are extracellular. Asparagine 5 is a glycosylation site (N-linked (GlcNAc...) asparagine). Residues 22-42 (MIAQFWSFFVSLLAMPSLIFF) traverse the membrane as a helical segment. The Cytoplasmic portion of the chain corresponds to 43–57 (MVEKVFKLPFHGNLK). The chain crosses the membrane as a helical span at residues 58 to 78 (FLLVSYFIGTFLFASIICFTF). The Extracellular segment spans residues 79–103 (GYHFFVPFFVTSNCDLIINATLFKY). A glycan (N-linked (GlcNAc...) asparagine) is linked at asparagine 97. A helical membrane pass occupies residues 104–124 (GHMIALIFMTIPMILPTAFTV). Residues 125 to 141 (ERFVALKMAHSYEHVRT) lie on the Cytoplasmic side of the membrane. A helical transmembrane segment spans residues 142–162 (LLGPVLVLVVIAIDSMFLYDI). Residues 163–189 (YGQEKFDKPFINFILVPATSALQFNSF) are Extracellular-facing. The helical transmembrane segment at 190–210 (LWYMLYLKITNFICNLILLFI) threads the bilayer. Over 211–243 (HKILHQSSRYRRKNVSLSVKYEMQEISQSSRFT) the chain is Cytoplasmic. A helical transmembrane segment spans residues 244-264 (LIVTFTHLLFFGWYVSTILLI). Residues 265 to 282 (RTVGPDFFRGFINYTVMR) are Extracellular-facing. The N-linked (GlcNAc...) asparagine glycan is linked to asparagine 277. The chain crosses the membrane as a helical span at residues 283 to 303 (GVYCATPTYNLVIVFIGFKAL). At 304–350 (NHLNFKRNNKVQSTIQIKSTGQEGAENYDNAISNYWDSVYTMNKSKL) the chain is on the cytoplasmic side.

It belongs to the nematode receptor-like protein srb family. Expressed throughout the head.

The protein resides in the cell membrane. Its subcellular location is the perikaryon. It localises to the cell projection. The protein localises to the dendrite. In terms of biological role, G-protein coupled receptor. Plays a role in the navigational capacity of sperm and promotes the targeting of sperm derived from males to the fertilization site in the uterus of hermaphrodites. In Caenorhabditis elegans, this protein is Serpentine receptor class beta-12.